Here is a 926-residue protein sequence, read N- to C-terminus: Centrosomal protein of 104 kDa (926 aa).

Residues 212–279 (EVAQIIRRLD…DLAKEKKQQM (68 aa)) are a coiled coil. Positions 345 to 419 (LQEKPSASSP…RGVAGEPEPL (75 aa)) are disordered. The segment covering 398 to 409 (AEVKEADSDVRR) has biased composition (basic and acidic residues). 2 HEAT repeats span residues 522-558 (THCV…ALFK) and 603-639 (GFTV…YRQH). Residues 678–730 (EAEVRAQKRVATKEAEKQKKEEMKALQGQSGELRETQAGVQEKESEAVKLRNQ) are a coiled coil. 2 stretches are compositionally biased toward basic and acidic residues: residues 690 to 701 (KEAEKQKKEEMK) and 718 to 729 (QEKESEAVKLRN). Disordered stretches follow at residues 690–741 (KEAE…VLPD) and 885–926 (APQQ…YMRR). The segment covering 889-903 (GKGPAAAKSSTSAPK) has biased composition (low complexity). The segment covering 916-926 (SKSSSRTYMRR) has biased composition (polar residues).

As to quaternary structure, interacts with CCP110 and CEP97. Interacts with ARMC9, TOGARAM1, CCDC66 and CSPP1.

It is found in the cell projection. It localises to the cilium. The protein resides in the cytoplasm. Its subcellular location is the cytoskeleton. The protein localises to the microtubule organizing center. It is found in the centrosome. It localises to the centriole. The protein resides in the spindle pole. In terms of biological role, required for ciliogenesis and for structural integrity at the ciliary tip. The polypeptide is Centrosomal protein of 104 kDa (Cep104) (Mus musculus (Mouse)).